We begin with the raw amino-acid sequence, 193 residues long: Ion-translocating oxidoreductase complex subunit A (193 aa).

A run of 6 helical transmembrane segments spans residues 5–25 (LLLFVGTVLVNNFVLVKFLGL), 47–67 (FVMTLASICAWLIDTWILIPL), 72–92 (LRTLAFILVIAVVVQFTEMVV), 102–122 (LLGIFLPLITTNCAVLGVALL), 134–154 (ALYGFSAAVGFSLVMVLFAAI), and 171–191 (AIALITAGLMSLAFMGFSGLV).

This sequence belongs to the NqrDE/RnfAE family. In terms of assembly, the complex is composed of six subunits: RnfA, RnfB, RnfC, RnfD, RnfE and RnfG.

It is found in the cell inner membrane. Part of a membrane-bound complex that couples electron transfer with translocation of ions across the membrane. The sequence is that of Ion-translocating oxidoreductase complex subunit A from Citrobacter koseri (strain ATCC BAA-895 / CDC 4225-83 / SGSC4696).